Reading from the N-terminus, the 578-residue chain is MNHKEITTLWSWIIVEELVRNSICFFCISPGSRSTPLTVAASRHQKTTCKIFPDERAAAFFALGYARATGRPAVLICTSGTAAANYFPAVVEASMGHQPMLVLSADRPFELRETGANQTIRQSGIYGSYSRWSFQLPEPSTDTPPEAILSAIDYAVSTCTANPSGPVHLNIAFREPLEPVPLNENSPWLSSLGKWNSSRAPWSRTLQRQSSPESASVKEVARLLASAENPLIIAGHLDRPADAQAVLNLSKSLNIALYADISSQLRLHKETVALQQAWLSDKYVEQHRADLVLHFGGSLVGKKPGQAMKTWRPDHTIVIKNHPDRYAPDHTVTMSIEASVKAFAEALAKTSQPQGKKANPIDEIEQEIERFTRPDSPVTEISAARIVSRLIDPGHGLFLANSMPVRDMDMYATRSGGTIIPTAMNRGASGIDGIISSAAGFASGLERPVTLLIGDISFLHDMNALCLLRSMTVPLTIVVINNNGGGIFSFLPISDQPDVFEKNFGTPQEFNIAAAATAFSIEYQCPPSNAAFSESYMAARSSAETSIIEIRSRRDENLALHRKLNQSLIDRLDRQQSC.

The protein belongs to the TPP enzyme family. MenD subfamily. In terms of assembly, homodimer. Mg(2+) serves as cofactor. The cofactor is Mn(2+). Requires thiamine diphosphate as cofactor.

It catalyses the reaction isochorismate + 2-oxoglutarate + H(+) = 5-enolpyruvoyl-6-hydroxy-2-succinyl-cyclohex-3-ene-1-carboxylate + CO2. Its pathway is quinol/quinone metabolism; 1,4-dihydroxy-2-naphthoate biosynthesis; 1,4-dihydroxy-2-naphthoate from chorismate: step 2/7. It participates in quinol/quinone metabolism; menaquinone biosynthesis. Its function is as follows. Catalyzes the thiamine diphosphate-dependent decarboxylation of 2-oxoglutarate and the subsequent addition of the resulting succinic semialdehyde-thiamine pyrophosphate anion to isochorismate to yield 2-succinyl-5-enolpyruvyl-6-hydroxy-3-cyclohexene-1-carboxylate (SEPHCHC). The protein is 2-succinyl-5-enolpyruvyl-6-hydroxy-3-cyclohexene-1-carboxylate synthase of Prosthecochloris aestuarii (strain DSM 271 / SK 413).